Reading from the N-terminus, the 494-residue chain is Fumigaclavine B O-acetyltransferase easN (494 aa).

The protein belongs to the fumigaclavine B O-acetyltransferase family. Monomer.

The catalysed reaction is fumigaclavine B + acetyl-CoA = fumigaclavine A + CoA. The protein operates within alkaloid biosynthesis; ergot alkaloid biosynthesis. Functionally, fumigaclavine B O-acetyltransferase; part of the gene cluster that mediates the biosynthesis of fumiclavanine C, a fungal ergot alkaloid. DmaW catalyzes the first step of ergot alkaloid biosynthesis by condensing dimethylallyl diphosphate (DMAP) and tryptophan to form 4-dimethylallyl-L-tryptophan. The second step is catalyzed by the methyltransferase easF that methylates 4-dimethylallyl-L-tryptophan in the presence of S-adenosyl-L-methionine, resulting in the formation of 4-dimethylallyl-L-abrine. The catalase easC and the FAD-dependent oxidoreductase easE then transform 4-dimethylallyl-L-abrine to chanoclavine-I which is further oxidized by EasD in the presence of NAD(+), resulting in the formation of chanoclavine-I aldehyde. EasA reduces chanoclavine-I aldehyde to dihydrochanoclavine-I aldehyde that spontaneously dehydrates to form 6,8-dimethyl-6,7-didehydroergoline. EasG then catalyzes the reduction of 6,8-dimethyl-6,7-didehydroergoline to form festuclavine. Hydrolysis of festuclavine by easM then leads to the formation of fumigaclavine B which is in turn acetylated by easN to fumigaclavine A. Finally, easL catalyzes the conversion of fumigaclavine A into fumigaclavine C by attaching a dimethylallyl moiety to C-2 of the indole nucleus. This is Fumigaclavine B O-acetyltransferase easN from Aspergillus fumigatus (strain ATCC MYA-4609 / CBS 101355 / FGSC A1100 / Af293) (Neosartorya fumigata).